The primary structure comprises 229 residues: Orotidine 5'-phosphate decarboxylase (229 aa).

Residues aspartate 11, lysine 33, 60–69 (DLKFHDIPNT), threonine 119, arginine 180, glutamine 189, glycine 209, and arginine 210 each bind substrate. Lysine 62 serves as the catalytic Proton donor.

Belongs to the OMP decarboxylase family. Type 1 subfamily. Homodimer.

It catalyses the reaction orotidine 5'-phosphate + H(+) = UMP + CO2. It participates in pyrimidine metabolism; UMP biosynthesis via de novo pathway; UMP from orotate: step 2/2. Catalyzes the decarboxylation of orotidine 5'-monophosphate (OMP) to uridine 5'-monophosphate (UMP). The polypeptide is Orotidine 5'-phosphate decarboxylase (Dichelobacter nodosus (strain VCS1703A)).